Reading from the N-terminus, the 377-residue chain is NIF3-like protein 1 (377 aa).

Lys-109 is subject to N6-acetyllysine. A mediates interaction with COPS2 region spans residues 244–377 (LLLYTGMGRL…ETDRDPLHVI (134 aa)). Thr-255 carries the phosphothreonine modification. Phosphoserine is present on Ser-259.

It belongs to the GTP cyclohydrolase I type 2/NIF3 family. In terms of assembly, homodimer. Interacts with COPS2. Interacts with THOC7.

Its subcellular location is the cytoplasm. The protein resides in the nucleus. Functionally, may function as a transcriptional corepressor through its interaction with COPS2, negatively regulating the expression of genes involved in neuronal differentiation. This Bos taurus (Bovine) protein is NIF3-like protein 1.